We begin with the raw amino-acid sequence, 286 residues long: Bifunctional protein FolD (286 aa).

Residues 165–167 (GRS) and Ser190 each bind NADP(+).

This sequence belongs to the tetrahydrofolate dehydrogenase/cyclohydrolase family. Homodimer.

The enzyme catalyses (6R)-5,10-methylene-5,6,7,8-tetrahydrofolate + NADP(+) = (6R)-5,10-methenyltetrahydrofolate + NADPH. The catalysed reaction is (6R)-5,10-methenyltetrahydrofolate + H2O = (6R)-10-formyltetrahydrofolate + H(+). It functions in the pathway one-carbon metabolism; tetrahydrofolate interconversion. Catalyzes the oxidation of 5,10-methylenetetrahydrofolate to 5,10-methenyltetrahydrofolate and then the hydrolysis of 5,10-methenyltetrahydrofolate to 10-formyltetrahydrofolate. This is Bifunctional protein FolD from Paraburkholderia phytofirmans (strain DSM 17436 / LMG 22146 / PsJN) (Burkholderia phytofirmans).